We begin with the raw amino-acid sequence, 180 residues long: MNPAPNLILIGPMGAGKTCIGRRLAERFTLDFVDVDQAIVDAAGASIPTIFEHSGEAGFRSHEREALARVLEGRGQLVSTGGGAVLDPGNRALIAQRGFVVYLRVSVNAQLERLARDKGRPLLQRPDREQVLHDLAAHRDPLYRELADITLDTDPYTAADATAHLVVKLATQWQRQDLTP.

14–19 (GAGKTC) contacts ATP. Residue T18 participates in Mg(2+) binding. Residues D36, R60, and G82 each contribute to the substrate site. R120 is an ATP binding site. Substrate is bound at residue R139.

It belongs to the shikimate kinase family. In terms of assembly, monomer. Mg(2+) is required as a cofactor.

The protein localises to the cytoplasm. It carries out the reaction shikimate + ATP = 3-phosphoshikimate + ADP + H(+). Its pathway is metabolic intermediate biosynthesis; chorismate biosynthesis; chorismate from D-erythrose 4-phosphate and phosphoenolpyruvate: step 5/7. In terms of biological role, catalyzes the specific phosphorylation of the 3-hydroxyl group of shikimic acid using ATP as a cosubstrate. The polypeptide is Shikimate kinase (Stenotrophomonas maltophilia (strain K279a)).